We begin with the raw amino-acid sequence, 1081 residues long: DNA polymerase delta catalytic subunit (1081 aa).

Residues 1–22 (MTSKRPGGSSFQPEVKRKRESD) form a disordered region. Zn(2+) contacts are provided by Cys981, Cys984, Cys998, and Cys1001. The segment at 981-1001 (CLGCKSVLPRAESENAVCKHC) adopts a CysA-type zinc-finger fold. Cys1030, Cys1033, Cys1043, and Cys1048 together coordinate [4Fe-4S] cluster. Residues 1030-1048 (CQNCAKTMQDKVNCSARDC) carry the CysB motif motif.

Belongs to the DNA polymerase type-B family. Heterodimer with subunits of 125 kDa and 50 kDa. The 125 kDa subunit contains the polymerase active site and most likely the active site for the 3'-5' exonuclease activity. Requires [4Fe-4S] cluster as cofactor.

Its subcellular location is the nucleus. The catalysed reaction is DNA(n) + a 2'-deoxyribonucleoside 5'-triphosphate = DNA(n+1) + diphosphate. Its function is as follows. Possesses two enzymatic activities: DNA synthesis (polymerase) and an exonucleolytic activity that degrades single stranded DNA in the 3'- to 5'-direction. Required with its accessory proteins (proliferating cell nuclear antigen (PCNA) and replication factor C (RFC) or activator 1) for leading strand synthesis. Also involved in completing Okazaki fragments initiated by the DNA polymerase alpha/primase complex. The sequence is that of DNA polymerase delta catalytic subunit from Caenorhabditis elegans.